Consider the following 230-residue polypeptide: Secretory carrier-associated membrane protein 4 (230 aa).

Over 1-39 (MAGKENNFPPLPPFLPLKPCFYQDFSDEIPVEHQVLVKR) the chain is Cytoplasmic. 4 helical membrane passes run 40 to 60 (IYRL…ACLA), 61 to 81 (WWIA…LVLF), 106 to 126 (MTFF…AIGF), and 149 to 169 (VVML…AVTI). The Cytoplasmic segment spans residues 170 to 230 (VKVHRIYRGA…SYSSSGGHWP (61 aa)). Thr194 is subject to Phosphothreonine.

The protein belongs to the SCAMP family.

The protein resides in the membrane. Its function is as follows. Probably involved in membrane protein trafficking. The chain is Secretory carrier-associated membrane protein 4 (Scamp4) from Mus musculus (Mouse).